Consider the following 228-residue polypeptide: Ribonuclease 3 (228 aa).

In terms of domain architecture, RNase III spans 7–136 (LNKLKNEYNI…FNGALFLDQG (130 aa)). Glu-49 contacts Mg(2+). Asp-53 is an active-site residue. Mg(2+) contacts are provided by Asp-122 and Glu-125. Residue Glu-125 is part of the active site. In terms of domain architecture, DRBM spans 162-228 (DYKTDLQELL…AAKAALQKFE (67 aa)). The interval 207-228 (GEGHNKKAAEQQAAKAALQKFE) is disordered. Over residues 216 to 228 (EQQAAKAALQKFE) the composition is skewed to low complexity.

Belongs to the ribonuclease III family. In terms of assembly, homodimer. Mg(2+) serves as cofactor.

Its subcellular location is the cytoplasm. It carries out the reaction Endonucleolytic cleavage to 5'-phosphomonoester.. Its function is as follows. Digests double-stranded RNA. Involved in the processing of primary rRNA transcript to yield the immediate precursors to the large and small rRNAs (23S and 16S). Processes some mRNAs, and tRNAs when they are encoded in the rRNA operon. Processes pre-crRNA and tracrRNA of type II CRISPR loci if present in the organism. This is Ribonuclease 3 from Lactobacillus acidophilus (strain ATCC 700396 / NCK56 / N2 / NCFM).